The sequence spans 223 residues: Ribosomal RNA small subunit methyltransferase G (223 aa).

S-adenosyl-L-methionine is bound by residues glycine 84, leucine 89, 135–136 (VE), and arginine 150.

The protein belongs to the methyltransferase superfamily. RNA methyltransferase RsmG family.

It is found in the cytoplasm. The catalysed reaction is guanosine(527) in 16S rRNA + S-adenosyl-L-methionine = N(7)-methylguanosine(527) in 16S rRNA + S-adenosyl-L-homocysteine. In terms of biological role, specifically methylates the N7 position of guanine in position 527 of 16S rRNA. In Saccharophagus degradans (strain 2-40 / ATCC 43961 / DSM 17024), this protein is Ribosomal RNA small subunit methyltransferase G.